A 49-amino-acid chain; its full sequence is Large ribosomal subunit protein bL33 (49 aa).

The protein belongs to the bacterial ribosomal protein bL33 family.

The sequence is that of Large ribosomal subunit protein bL33 from Pelotomaculum thermopropionicum (strain DSM 13744 / JCM 10971 / SI).